We begin with the raw amino-acid sequence, 382 residues long: Neuropeptide Y receptor type 2 (382 aa).

The tract at residues M1–P39 is disordered. Topologically, residues M1–K46 are extracellular. N11 is a glycosylation site (N-linked (GlcNAc...) asparagine). The helical transmembrane segment at L47 to V67 threads the bilayer. Residues G68–N87 lie on the Cytoplasmic side of the membrane. A helical transmembrane segment spans residues F88–T108. At L109–H125 the chain is on the extracellular side. A disulfide bridge links C124 with C204. A helical membrane pass occupies residues L126 to A146. The Cytoplasmic segment spans residues L147–S166. Residues F167–F187 form a helical membrane-spanning segment. Residues R188–G217 are Extracellular-facing. A helical membrane pass occupies residues T218–F238. The Cytoplasmic segment spans residues S239–K269. Residues M270–L290 form a helical membrane-spanning segment. The Extracellular segment spans residues A291 to K305. The helical transmembrane segment at L306 to Y326 threads the bilayer. Residues G327–V382 lie on the Cytoplasmic side of the membrane. The S-palmitoyl cysteine moiety is linked to residue C343. The interval N363–V382 is disordered.

It belongs to the G-protein coupled receptor 1 family.

Its subcellular location is the cell membrane. Its function is as follows. Receptor for neuropeptide Y and peptide YY. The protein is Neuropeptide Y receptor type 2 (NPY2R) of Sus scrofa (Pig).